The chain runs to 153 residues: Transcriptional repressor NrdR (153 aa).

A zinc finger spans residues 3–34 (CPSCHHSGTRVLESRPVEEGRSIRRRRECEQC). Residues 49–139 (LIVVKKEGTR…VYRQFKDINV (91 aa)) enclose the ATP-cone domain.

The protein belongs to the NrdR family. Requires Zn(2+) as cofactor.

Functionally, negatively regulates transcription of bacterial ribonucleotide reductase nrd genes and operons by binding to NrdR-boxes. This chain is Transcriptional repressor NrdR, found in Geobacillus kaustophilus (strain HTA426).